The primary structure comprises 196 residues: Ribosome maturation factor RimP (196 aa).

The tract at residues 164–196 (LAPQKPNKPGPKKPGHDKKKPSNEPAAGKPRAE) is disordered. The span at 173–182 (GPKKPGHDKK) shows a compositional bias: basic residues.

The protein belongs to the RimP family.

It localises to the cytoplasm. Required for maturation of 30S ribosomal subunits. The sequence is that of Ribosome maturation factor RimP from Xanthomonas campestris pv. campestris (strain 8004).